A 366-amino-acid polypeptide reads, in one-letter code: Sulfite reductase, dissimilatory-type subunit beta (366 aa).

Residues Cys140, Cys177, Cys178, Cys182, Cys220, Cys241, Cys244, and Cys247 each coordinate [4Fe-4S] cluster. Cys182 is a binding site for siroheme. The 4Fe-4S ferredoxin-type domain maps to 232–262 (KTIKVDVEKCMYCGNCYTMCPGMPLFDPEND).

Heterotetramer of two alpha and two beta subunits. It depends on [4Fe-4S] cluster as a cofactor. Siroheme serves as cofactor.

The protein resides in the membrane. It catalyses the reaction [DsrC protein]-trisulfide + NAD(+) + 3 H2O = [DsrC protein]-dithiol + sulfite + NADH + 3 H(+). Catalyzes the reduction of sulfite to sulfide. This is the terminal oxidation reaction in sulfate respiration. In Archaeoglobus fulgidus (strain ATCC 49558 / DSM 4304 / JCM 9628 / NBRC 100126 / VC-16), this protein is Sulfite reductase, dissimilatory-type subunit beta (dsrB).